The sequence spans 216 residues: Probable GTP-binding protein EngB (216 aa).

The 182-residue stretch at 24–205 (ATPEIAFVGR…WARLAALAAE (182 aa)) folds into the EngB-type G domain. GTP is bound by residues 32 to 39 (GRSNVGKS), 59 to 63 (GRTRA), 86 to 89 (DLPG), 153 to 156 (TKTD), and 184 to 186 (FSA). S39 and T61 together coordinate Mg(2+).

This sequence belongs to the TRAFAC class TrmE-Era-EngA-EngB-Septin-like GTPase superfamily. EngB GTPase family. It depends on Mg(2+) as a cofactor.

Its function is as follows. Necessary for normal cell division and for the maintenance of normal septation. The protein is Probable GTP-binding protein EngB of Anaeromyxobacter dehalogenans (strain 2CP-1 / ATCC BAA-258).